A 368-amino-acid polypeptide reads, in one-letter code: Phospho-N-acetylmuramoyl-pentapeptide-transferase (368 aa).

Transmembrane regions (helical) follow at residues Gly-34 to Leu-54, Thr-79 to Ala-99, Leu-102 to Tyr-122, Ala-140 to Gly-160, Leu-176 to Gly-196, Gly-207 to Ala-227, Leu-247 to Pro-267, Ile-271 to Ala-291, Ile-296 to Val-316, and Gln-345 to Leu-365.

Belongs to the glycosyltransferase 4 family. MraY subfamily. Requires Mg(2+) as cofactor.

Its subcellular location is the cell inner membrane. It carries out the reaction UDP-N-acetyl-alpha-D-muramoyl-L-alanyl-gamma-D-glutamyl-meso-2,6-diaminopimeloyl-D-alanyl-D-alanine + di-trans,octa-cis-undecaprenyl phosphate = di-trans,octa-cis-undecaprenyl diphospho-N-acetyl-alpha-D-muramoyl-L-alanyl-D-glutamyl-meso-2,6-diaminopimeloyl-D-alanyl-D-alanine + UMP. The protein operates within cell wall biogenesis; peptidoglycan biosynthesis. Its function is as follows. Catalyzes the initial step of the lipid cycle reactions in the biosynthesis of the cell wall peptidoglycan: transfers peptidoglycan precursor phospho-MurNAc-pentapeptide from UDP-MurNAc-pentapeptide onto the lipid carrier undecaprenyl phosphate, yielding undecaprenyl-pyrophosphoryl-MurNAc-pentapeptide, known as lipid I. This is Phospho-N-acetylmuramoyl-pentapeptide-transferase from Bradyrhizobium sp. (strain ORS 278).